The primary structure comprises 846 residues: ATR-interacting protein mus304 (846 aa).

Disordered regions lie at residues 20-40 (DVSVTRGSARPSPPRNNFDGI), 90-109 (QGSTSTQQMFPPPPPPQKKP), and 135-162 (EPQKMPEPKTSTSRITTSSISVQQKTTT). Low complexity predominate over residues 144–162 (TSTSRITTSSISVQQKTTT). Coiled-coil stretches lie at residues 168–240 (ATQS…LADE) and 327–359 (EYSENEDQTKKRRNHFELELKQLLLHYARLQAK). An EEXXXDL motif motif is present at residues 504–510 (EELLFDL). The tract at residues 651-681 (GAVQGSVSNGSTSASVSNPNQNSNSSTTQRG) is disordered. The span at 655-676 (GSVSNGSTSASVSNPNQNSNSS) shows a compositional bias: low complexity.

The protein belongs to the ATRIP family. As to quaternary structure, interacts with ATR/mei-41. As to expression, highly expressed in the oocyte and nurse cells from stage 5 onward and in embryos prior to during nuclear division 14. Then, it decreases to background levels during interphase 14. Weakly or not expressed in stage embryos and imaginal disks.

It localises to the cytoplasm. Functionally, DNA damage checkpoint protein required for chromosome break repair and for genomic stability during development. In Drosophila melanogaster (Fruit fly), this protein is ATR-interacting protein mus304 (mus304).